The chain runs to 480 residues: NADH-quinone oxidoreductase subunit N (480 aa).

Helical transmembrane passes span asparagine 5 to tyrosine 25, isoleucine 40 to tyrosine 60, isoleucine 69 to phenylalanine 89, valine 110 to methionine 130, tyrosine 162 to glycine 182, leucine 204 to leucine 224, valine 237 to leucine 257, leucine 266 to phenylalanine 286, phenylalanine 296 to threonine 316, isoleucine 324 to valine 344, alanine 368 to phenylalanine 388, isoleucine 404 to valine 424, and methionine 450 to isoleucine 470.

This sequence belongs to the complex I subunit 2 family. In terms of assembly, NDH-1 is composed of 14 different subunits. Subunits NuoA, H, J, K, L, M, N constitute the membrane sector of the complex.

The protein resides in the cell inner membrane. The catalysed reaction is a quinone + NADH + 5 H(+)(in) = a quinol + NAD(+) + 4 H(+)(out). NDH-1 shuttles electrons from NADH, via FMN and iron-sulfur (Fe-S) centers, to quinones in the respiratory chain. The immediate electron acceptor for the enzyme in this species is believed to be a menaquinone. Couples the redox reaction to proton translocation (for every two electrons transferred, four hydrogen ions are translocated across the cytoplasmic membrane), and thus conserves the redox energy in a proton gradient. The sequence is that of NADH-quinone oxidoreductase subunit N from Azobacteroides pseudotrichonymphae genomovar. CFP2.